The following is a 350-amino-acid chain: 4-hydroxy-3-methylbut-2-enyl diphosphate reductase (350 aa).

Residue Cys-19 participates in [4Fe-4S] cluster binding. (2E)-4-hydroxy-3-methylbut-2-enyl diphosphate is bound by residues His-48 and His-84. Residues His-48 and His-84 each contribute to the dimethylallyl diphosphate site. Positions 48 and 84 each coordinate isopentenyl diphosphate. Cys-106 contributes to the [4Fe-4S] cluster binding site. Residue His-134 participates in (2E)-4-hydroxy-3-methylbut-2-enyl diphosphate binding. His-134 lines the dimethylallyl diphosphate pocket. His-134 contacts isopentenyl diphosphate. Glu-136 serves as the catalytic Proton donor. Thr-175 is a (2E)-4-hydroxy-3-methylbut-2-enyl diphosphate binding site. Cys-205 provides a ligand contact to [4Fe-4S] cluster. 4 residues coordinate (2E)-4-hydroxy-3-methylbut-2-enyl diphosphate: Ser-233, Ser-234, Asn-235, and Ser-278. 4 residues coordinate dimethylallyl diphosphate: Ser-233, Ser-234, Asn-235, and Ser-278. Isopentenyl diphosphate is bound by residues Ser-233, Ser-234, Asn-235, and Ser-278.

The protein belongs to the IspH family. Requires [4Fe-4S] cluster as cofactor.

The catalysed reaction is isopentenyl diphosphate + 2 oxidized [2Fe-2S]-[ferredoxin] + H2O = (2E)-4-hydroxy-3-methylbut-2-enyl diphosphate + 2 reduced [2Fe-2S]-[ferredoxin] + 2 H(+). It catalyses the reaction dimethylallyl diphosphate + 2 oxidized [2Fe-2S]-[ferredoxin] + H2O = (2E)-4-hydroxy-3-methylbut-2-enyl diphosphate + 2 reduced [2Fe-2S]-[ferredoxin] + 2 H(+). It functions in the pathway isoprenoid biosynthesis; dimethylallyl diphosphate biosynthesis; dimethylallyl diphosphate from (2E)-4-hydroxy-3-methylbutenyl diphosphate: step 1/1. It participates in isoprenoid biosynthesis; isopentenyl diphosphate biosynthesis via DXP pathway; isopentenyl diphosphate from 1-deoxy-D-xylulose 5-phosphate: step 6/6. Its function is as follows. Catalyzes the conversion of 1-hydroxy-2-methyl-2-(E)-butenyl 4-diphosphate (HMBPP) into a mixture of isopentenyl diphosphate (IPP) and dimethylallyl diphosphate (DMAPP). Acts in the terminal step of the DOXP/MEP pathway for isoprenoid precursor biosynthesis. This chain is 4-hydroxy-3-methylbut-2-enyl diphosphate reductase, found in Brucella anthropi (strain ATCC 49188 / DSM 6882 / CCUG 24695 / JCM 21032 / LMG 3331 / NBRC 15819 / NCTC 12168 / Alc 37) (Ochrobactrum anthropi).